A 423-amino-acid chain; its full sequence is Transmembrane protease serine 11E (423 aa).

At 1–18 (MYRSCVVRARKRTCVEPW) the chain is on the cytoplasmic side. The helical; Signal-anchor for type II membrane protein transmembrane segment at 19-39 (VIGIISFLSLIVLAVCIGLTV) threads the bilayer. Over 40 to 423 (HYVRYNHRRT…RHWIASNTGI (384 aa)) the chain is Extracellular. The SEA domain maps to 48 to 166 (RTYNYYSTLS…ESVKIKKINK (119 aa)). N-linked (GlcNAc...) asparagine glycosylation is found at Asn74, Asn165, Asn182, and Asn223. Intrachain disulfides connect Cys176/Cys297, Cys217/Cys233, Cys342/Cys358, and Cys369/Cys398. The region spanning 192-422 (IVGGTPVEEE…FRHWIASNTG (231 aa)) is the Peptidase S1 domain. Residues His232 and Asp277 each act as charge relay system in the active site. Ser373 acts as the Charge relay system in catalysis.

This sequence belongs to the peptidase S1 family. In terms of assembly, forms a heterodimer with SERPINA5 and SERPINE1. N-glycosylated. In terms of tissue distribution, expressed in epidermal, oral and male reproductive tissues.

It is found in the cell membrane. The protein localises to the secreted. With respect to regulation, inhibited by SERPINA5. Serine protease which possesses both gelatinolytic and caseinolytic activities. Shows a preference for Arg in the P1 position. In Mus musculus (Mouse), this protein is Transmembrane protease serine 11E (Tmprss11e).